An 854-amino-acid polypeptide reads, in one-letter code: DNA mismatch repair protein MutS (854 aa).

615–622 provides a ligand contact to ATP; it reads GPNMGGKS.

It belongs to the DNA mismatch repair MutS family.

Functionally, this protein is involved in the repair of mismatches in DNA. It is possible that it carries out the mismatch recognition step. This protein has a weak ATPase activity. The sequence is that of DNA mismatch repair protein MutS from Proteus mirabilis (strain HI4320).